A 306-amino-acid polypeptide reads, in one-letter code: Ribosomal protein L11 methyltransferase (306 aa).

S-adenosyl-L-methionine-binding residues include Thr-154, Gly-179, Asp-201, and Asn-242.

It belongs to the methyltransferase superfamily. PrmA family.

The protein localises to the cytoplasm. The catalysed reaction is L-lysyl-[protein] + 3 S-adenosyl-L-methionine = N(6),N(6),N(6)-trimethyl-L-lysyl-[protein] + 3 S-adenosyl-L-homocysteine + 3 H(+). Functionally, methylates ribosomal protein L11. The chain is Ribosomal protein L11 methyltransferase from Stenotrophomonas maltophilia (strain K279a).